Here is a 256-residue protein sequence, read N- to C-terminus: tRNA-cytidine(32) 2-sulfurtransferase 1 (256 aa).

The PP-loop motif signature appears at 38 to 43 (SGGKDS). [4Fe-4S] cluster-binding residues include Cys113, Cys116, and Cys204.

The protein belongs to the TtcA family. As to quaternary structure, homodimer. It depends on Mg(2+) as a cofactor. [4Fe-4S] cluster is required as a cofactor.

Its subcellular location is the cytoplasm. It carries out the reaction cytidine(32) in tRNA + S-sulfanyl-L-cysteinyl-[cysteine desulfurase] + AH2 + ATP = 2-thiocytidine(32) in tRNA + L-cysteinyl-[cysteine desulfurase] + A + AMP + diphosphate + H(+). It participates in tRNA modification. In terms of biological role, catalyzes the ATP-dependent 2-thiolation of cytidine in position 32 of tRNA, to form 2-thiocytidine (s(2)C32). The sulfur atoms are provided by the cysteine/cysteine desulfurase (IscS) system. The protein is tRNA-cytidine(32) 2-sulfurtransferase 1 of Francisella philomiragia subsp. philomiragia (strain ATCC 25017 / CCUG 19701 / FSC 153 / O#319-036).